We begin with the raw amino-acid sequence, 270 residues long: Thiazole synthase (270 aa).

Lys112 (schiff-base intermediate with DXP) is an active-site residue. Residues Gly173, 199-200, and 221-222 each bind 1-deoxy-D-xylulose 5-phosphate; these read AG and NS.

This sequence belongs to the ThiG family. As to quaternary structure, homotetramer. Forms heterodimers with either ThiH or ThiS.

It is found in the cytoplasm. The enzyme catalyses [ThiS sulfur-carrier protein]-C-terminal-Gly-aminoethanethioate + 2-iminoacetate + 1-deoxy-D-xylulose 5-phosphate = [ThiS sulfur-carrier protein]-C-terminal Gly-Gly + 2-[(2R,5Z)-2-carboxy-4-methylthiazol-5(2H)-ylidene]ethyl phosphate + 2 H2O + H(+). It participates in cofactor biosynthesis; thiamine diphosphate biosynthesis. Catalyzes the rearrangement of 1-deoxy-D-xylulose 5-phosphate (DXP) to produce the thiazole phosphate moiety of thiamine. Sulfur is provided by the thiocarboxylate moiety of the carrier protein ThiS. In vitro, sulfur can be provided by H(2)S. In Pseudomonas entomophila (strain L48), this protein is Thiazole synthase.